An 812-amino-acid chain; its full sequence is Leucine-rich repeat-containing protein 41 (812 aa).

An interaction with Elongin BC complex region spans residues 45–54 (ALFELCGRAV). Phosphoserine occurs at positions 155, 276, and 326. Residues 267-408 (GEASRGRAPS…GARTRQGPGA (142 aa)) form a disordered region. Thr327 is modified (phosphothreonine). Residues 354-381 (TKRSPSAPAATSSASSSTSSYKRAPASS) are compositionally biased toward low complexity. Ser357 and Ser373 each carry phosphoserine. The span at 387 to 401 (PLKRFKRAAGKKGAR) shows a compositional bias: basic residues. LRR repeat units follow at residues 487 to 507 (WVSL…IFRL), 518 to 530 (AGCR…LSDL), 531 to 555 (FSPL…VLSI), 613 to 635 (SGSL…FGLV), 636 to 659 (LQTL…LADC), 701 to 728 (NSTL…VFSE), and 731 to 752 (SSSL…LLEF).

As to quaternary structure, part of an E3 ubiquitin-protein ligase complex with Elongin BC (ELOB and ELOC), RBX1 and CUL5. Component of a probable ECS(LRRC41) complex which contains CUL5, RNF7/RBX2, Elongin BC and LRRC41. Interacts with CUL5, RNF7, ELOB and ELOC.

Its pathway is protein modification; protein ubiquitination. Its function is as follows. Probable substrate recognition component of an ECS (Elongin BC-CUL2/5-SOCS-box protein) E3 ubiquitin ligase complex which mediates the ubiquitination and subsequent proteasomal degradation of target proteins. This Homo sapiens (Human) protein is Leucine-rich repeat-containing protein 41 (LRRC41).